Here is a 156-residue protein sequence, read N- to C-terminus: Ecotin (156 aa).

The N-terminal stretch at 1–19 (MKALLIAAGVAALSSTAMA) is a signal peptide. A disulfide bridge connects residues cysteine 65 and cysteine 102.

This sequence belongs to the protease inhibitor I11 (ecotin) family. In terms of assembly, homodimer.

The protein resides in the periplasm. Its function is as follows. General inhibitor of family S1 serine proteases. The chain is Ecotin from Pseudomonas aeruginosa (strain ATCC 15692 / DSM 22644 / CIP 104116 / JCM 14847 / LMG 12228 / 1C / PRS 101 / PAO1).